We begin with the raw amino-acid sequence, 735 residues long: Transcription factor RFX4 (735 aa).

The tract at residues 27–59 (NKRYSSHTSLGNVSNDENEEKENNRASKPHSTP) is disordered. Over residues 32–41 (SHTSLGNVSN) the composition is skewed to polar residues. The DNA-binding element occupies 44 to 126 (NEEKENNRAS…RRLGTRGQSK (83 aa)). A DNA-binding region (RFX-type winged-helix) is located at residues 61 to 136 (TLQWLEENYE…YHYYGIAVKE (76 aa)). Residues 315–487 (RFSQILRRQT…NELMRAMKGE (173 aa)) form a necessary for dimerization region. The segment at 501–538 (EATPPTPSPGPSFSPAKSATSVEVPPPSSPVSNPSPEY) is disordered.

The protein belongs to the RFX family. As to quaternary structure, homodimer. Heterodimer with RFX2 and RFX3. Binds DNA. Interacts with GPS2. As to expression, isoform 1: Brain-specific. Isoform 2: Testis-specific. Isoform 1: Highly expressed in the suprachiasmatic nucleus, the central pacemaker site of the circadian clock (at protein level).

Its subcellular location is the nucleus. In terms of biological role, transcription factor that plays a role in early brain development. May activate transcription by interacting directly with the X-box. May activate transcription from CX3CL1 promoter through the X-box during brain development. May be required for neural tube ciliogenesis during embryogenesis. This chain is Transcription factor RFX4 (Rfx4), found in Mus musculus (Mouse).